Consider the following 251-residue polypeptide: Triosephosphate isomerase (251 aa).

Residue Asn9 to Lys11 coordinates substrate. His95 serves as the catalytic Electrophile. The Proton acceptor role is filled by Glu167. Substrate-binding positions include Gly173, Ser213, and Gly234 to Gly235. A Phosphoserine modification is found at Ser213.

The protein belongs to the triosephosphate isomerase family. Homodimer.

It localises to the cytoplasm. The catalysed reaction is D-glyceraldehyde 3-phosphate = dihydroxyacetone phosphate. Its pathway is carbohydrate biosynthesis; gluconeogenesis. The protein operates within carbohydrate degradation; glycolysis; D-glyceraldehyde 3-phosphate from glycerone phosphate: step 1/1. Functionally, involved in the gluconeogenesis. Catalyzes stereospecifically the conversion of dihydroxyacetone phosphate (DHAP) to D-glyceraldehyde-3-phosphate (G3P). In Bacillus cereus (strain B4264), this protein is Triosephosphate isomerase.